We begin with the raw amino-acid sequence, 88 residues long: Putative membrane protein insertion efficiency factor (88 aa).

The tract at residues 66-88 (DFVPPKKDKNADSEHSCKAHHHH) is disordered. The span at 69-82 (PPKKDKNADSEHSC) shows a compositional bias: basic and acidic residues.

Belongs to the UPF0161 family.

The protein localises to the cell membrane. Its function is as follows. Could be involved in insertion of integral membrane proteins into the membrane. This chain is Putative membrane protein insertion efficiency factor, found in Listeria monocytogenes serotype 4a (strain HCC23).